Consider the following 246-residue polypeptide: 1-(5-phosphoribosyl)-5-[(5-phosphoribosylamino)methylideneamino] imidazole-4-carboxamide isomerase (246 aa).

D8 functions as the Proton acceptor in the catalytic mechanism. D131 (proton donor) is an active-site residue.

This sequence belongs to the HisA/HisF family.

The protein localises to the cytoplasm. The enzyme catalyses 1-(5-phospho-beta-D-ribosyl)-5-[(5-phospho-beta-D-ribosylamino)methylideneamino]imidazole-4-carboxamide = 5-[(5-phospho-1-deoxy-D-ribulos-1-ylimino)methylamino]-1-(5-phospho-beta-D-ribosyl)imidazole-4-carboxamide. It functions in the pathway amino-acid biosynthesis; L-histidine biosynthesis; L-histidine from 5-phospho-alpha-D-ribose 1-diphosphate: step 4/9. The polypeptide is 1-(5-phosphoribosyl)-5-[(5-phosphoribosylamino)methylideneamino] imidazole-4-carboxamide isomerase (Albidiferax ferrireducens (strain ATCC BAA-621 / DSM 15236 / T118) (Rhodoferax ferrireducens)).